Reading from the N-terminus, the 307-residue chain is MAARSIASLSLSFGLVSIPVKLYSATESSSDVRFNLLAPDGSRVRQQYISESSGAVVERSSMKKGYEFEKDRFVVFTADELKALEESASHVVEIVAFIPEKSIDPVYYDKAYYIAPDRRGGKPYSLLQQALAESGRCALAKWASKGKTRIVQVRPSADGLVFQQLLFADEVRSMKDLNIEHVDVSASELKLAMQIIEQGTEDHYDPAAYEDEEKKRILAAIDRKIEGKQVISNERADVPAEGGEVIDLMEALRASLRGGAKAKPAAAPRRKAPEPVAGMAEATRARKPAARAPKSPAEAPAKVRARK.

The Ku domain maps to 11–179 (LSFGLVSIPV…EVRSMKDLNI (169 aa)). Composition is skewed to low complexity over residues 257-267 (RGGAKAKPAAA) and 290-307 (ARAP…RARK). The interval 257-307 (RGGAKAKPAAAPRRKAPEPVAGMAEATRARKPAARAPKSPAEAPAKVRARK) is disordered.

The protein belongs to the prokaryotic Ku family. As to quaternary structure, homodimer. Interacts with LigD.

In terms of biological role, with LigD forms a non-homologous end joining (NHEJ) DNA repair enzyme, which repairs dsDNA breaks with reduced fidelity. Binds linear dsDNA with 5'- and 3'- overhangs but not closed circular dsDNA nor ssDNA. Recruits and stimulates the ligase activity of LigD. The protein is Non-homologous end joining protein Ku of Paraburkholderia phymatum (strain DSM 17167 / CIP 108236 / LMG 21445 / STM815) (Burkholderia phymatum).